Here is a 206-residue protein sequence, read N- to C-terminus: ATP phosphoribosyltransferase (206 aa).

Belongs to the ATP phosphoribosyltransferase family. Short subfamily. As to quaternary structure, heteromultimer composed of HisG and HisZ subunits.

The protein resides in the cytoplasm. The enzyme catalyses 1-(5-phospho-beta-D-ribosyl)-ATP + diphosphate = 5-phospho-alpha-D-ribose 1-diphosphate + ATP. It functions in the pathway amino-acid biosynthesis; L-histidine biosynthesis; L-histidine from 5-phospho-alpha-D-ribose 1-diphosphate: step 1/9. Catalyzes the condensation of ATP and 5-phosphoribose 1-diphosphate to form N'-(5'-phosphoribosyl)-ATP (PR-ATP). Has a crucial role in the pathway because the rate of histidine biosynthesis seems to be controlled primarily by regulation of HisG enzymatic activity. The protein is ATP phosphoribosyltransferase of Thermus thermophilus (strain ATCC 27634 / DSM 579 / HB8).